The chain runs to 305 residues: UDP-3-O-acyl-N-acetylglucosamine deacetylase (305 aa).

Histidine 79, histidine 238, and aspartate 242 together coordinate Zn(2+). The active-site Proton donor is histidine 265.

The protein belongs to the LpxC family. Zn(2+) is required as a cofactor.

The catalysed reaction is a UDP-3-O-[(3R)-3-hydroxyacyl]-N-acetyl-alpha-D-glucosamine + H2O = a UDP-3-O-[(3R)-3-hydroxyacyl]-alpha-D-glucosamine + acetate. Its pathway is glycolipid biosynthesis; lipid IV(A) biosynthesis; lipid IV(A) from (3R)-3-hydroxytetradecanoyl-[acyl-carrier-protein] and UDP-N-acetyl-alpha-D-glucosamine: step 2/6. Its function is as follows. Catalyzes the hydrolysis of UDP-3-O-myristoyl-N-acetylglucosamine to form UDP-3-O-myristoylglucosamine and acetate, the committed step in lipid A biosynthesis. In Salmonella typhi, this protein is UDP-3-O-acyl-N-acetylglucosamine deacetylase.